Consider the following 427-residue polypeptide: ATP-sensitive inward rectifier potassium channel 12 (427 aa).

The Cytoplasmic segment spans residues Met1–Asp77. Residue Cys75 is modified to S-nitrosocysteine. Residues Ile78 to Val104 traverse the membrane as a helical segment. A 1,2-diacyl-sn-glycero-3-phospho-(1D-myo-inositol-4,5-bisphosphate)-binding residues include Arg79 and Arg81. Residues Ile105 to Gly129 are Extracellular-facing. A disulfide bridge links Cys123 with Cys155. The segment at residues Phe130 to Tyr146 is an intramembrane region (helical; Pore-forming). Residues Thr143, Ile144, Gly145, and Tyr146 each coordinate K(+). A Selectivity filter motif is present at residues Thr143–Leu148. Residues Gly147–Cys155 lie on the Extracellular side of the membrane. A helical transmembrane segment spans residues Pro156 to Lys183. A 1,2-diacyl-sn-glycero-3-phospho-(1D-myo-inositol-4,5-bisphosphate)-binding residues include Lys183 and Lys188. Topologically, residues Met184 to Ile427 are cytoplasmic. The interval Asp387 to Ile427 is disordered. Residues Ala393–Arg409 show a composition bias toward basic and acidic residues. The PDZ-binding motif lies at Ser425 to Ile427.

This sequence belongs to the inward rectifier-type potassium channel (TC 1.A.2.1) family. KCNJ12 subfamily. Homotetramer. Forms heteromer with KCNJ4. Can form heteromeric channels with Kir2.6/KCNJ18. Association, via its PDZ-recognition domain, with LIN7A, LIN7B, LIN7C, DLG1, CASK and APBA1 plays a key role in its localization and trafficking. In terms of tissue distribution, highest level in cerebellum.

It is found in the membrane. The protein localises to the cell membrane. Its subcellular location is the sarcolemma. It localises to the T-tubule. It carries out the reaction K(+)(in) = K(+)(out). Activated by phosphatidylinositol 4,5-biphosphate (PtdIns(4,5)P2). PtdIns(4,5)P2 binding to the cytoplasmic side of the channel triggers a conformation change leading to channel opening. Inhibited by Ba(2+). Inward rectifying potassium channel that probably participates in controlling the resting membrane potential in electrically excitable cells. It probably participates in establishing action potential waveform and excitability of neuronal and muscle tissues. Inward rectifier potassium channels are characterized by a greater tendency to allow potassium to flow into the cell rather than out of it. Their voltage dependence is regulated by the concentration of extracellular potassium; as external potassium is raised, the voltage range of the channel opening shifts to more positive voltages. The inward rectification is mainly due to the blockage of outward current by internal magnesium. This Mus musculus (Mouse) protein is ATP-sensitive inward rectifier potassium channel 12 (Kcnj12).